A 320-amino-acid polypeptide reads, in one-letter code: Fructose-1,6-bisphosphatase class 1 (320 aa).

Residues Glu105, Asp124, Leu126, and Asp127 each contribute to the Mg(2+) site. Residues 127-130, Tyr233, and Lys263 each bind substrate; that span reads DGSS. Mg(2+) is bound at residue Glu269.

Belongs to the FBPase class 1 family. As to quaternary structure, homotetramer. The cofactor is Mg(2+).

It localises to the cytoplasm. The enzyme catalyses beta-D-fructose 1,6-bisphosphate + H2O = beta-D-fructose 6-phosphate + phosphate. It functions in the pathway carbohydrate biosynthesis; gluconeogenesis. The chain is Fructose-1,6-bisphosphatase class 1 from Methanocorpusculum labreanum (strain ATCC 43576 / DSM 4855 / Z).